The chain runs to 268 residues: Zinc finger protein SNAI2 (268 aa).

Residues 1–20 (MPRSFLVKKHFNASKKPNYS) form an SNAG domain region. A disordered region spans residues 84–116 (GRVSPLPSSDTSSKDHSGSESPISDEEERLQPK). 4 C2H2-type zinc fingers span residues 128–150 (FQCN…KQLH), 159–181 (FSCK…IRTH), 185–207 (CVCK…IRTH), and 213–235 (FSCP…LQTH). A C2H2-type 5; atypical zinc finger spans residues 241 to 264 (YQCKNCSKTFSRMSLLHKHEESGC).

This sequence belongs to the snail C2H2-type zinc-finger protein family. In terms of assembly, interacts (via SNAG domain) with LIMD1 (via LIM domains), WTIP (via LIM domains) and AJUBA (via LIM domains). Interacts (via zinc fingers) with KPNA2, KPNB1 and TNPO1. May interact (via zinc fingers) with IPO7. Post-translationally, phosphorylated by GSK3B. Once phosphorylated, it becomes a target for ubiquitination. Ubiquitinated by the SCF(FBXO11) complex; ubiquitination requires previous GSK3B-mediated SNAI2 phosphorylation.

The protein resides in the nucleus. It localises to the cytoplasm. Its function is as follows. Transcriptional repressor that modulates both activator-dependent and basal transcription. Involved in the generation and migration of neural crest cells. Plays a role in mediating RAF1-induced transcriptional repression of the TJ protein, occludin (OCLN) and subsequent oncogenic transformation of epithelial cells. Represses BRCA2 expression by binding to its E2-box-containing silencer and recruiting CTBP1 and HDAC1 in breast cells. In epidermal keratinocytes, binds to the E-box in ITGA3 promoter and represses its transcription. Involved in the regulation of ITGB1 and ITGB4 expression and cell adhesion and proliferation in epidermal keratinocytes. Binds to E-box2 domain of BSG and activates its expression during TGFB1-induced epithelial-mesenchymal transition (EMT) in hepatocytes. Represses E-Cadherin/CDH1 transcription via E-box elements. Involved in osteoblast maturation. Binds to RUNX2 and SOC9 promoters and may act as a positive and negative transcription regulator, respectively, in osteoblasts. Binds to CXCL12 promoter via E-box regions in mesenchymal stem cells and osteoblasts. Plays an essential role in TWIST1-induced EMT and its ability to promote invasion and metastasis. This Rattus norvegicus (Rat) protein is Zinc finger protein SNAI2 (Snai2).